The chain runs to 168 residues: D-aminoacyl-tRNA deacylase 2 (168 aa).

A Gly-transPro motif, allows the protein to recognize chirality of D-amino acids motif is present at residues 160–161 (GP).

The protein belongs to the DTD family. As to quaternary structure, homodimer.

Its subcellular location is the cytoplasm. The enzyme catalyses a D-aminoacyl-tRNA + H2O = a tRNA + a D-alpha-amino acid + H(+). It catalyses the reaction glycyl-tRNA(Ala) + H2O = tRNA(Ala) + glycine + H(+). It carries out the reaction D-tyrosyl-tRNA(Tyr) + H2O = D-tyrosine + tRNA(Tyr). The catalysed reaction is L-alanyl-tRNA(Thr) + H2O = tRNA(Thr) + L-alanine + H(+). Its function is as follows. Deacylates mischarged D-aminoacyl-tRNAs. Also deacylates mischarged glycyl-tRNA(Ala), protecting cells against glycine mischarging by AlaRS. Probably acts by rejecting L-amino acids from its binding site rather than specific recognition of D-amino acids. Catalyzes the hydrolysis of D-tyrosyl-tRNA(Tyr), has no activity on correctly charged L-tyrosyl-tRNA(Tyr). By recycling D-aminoacyl-tRNA to D-amino acids and free tRNA molecules, this enzyme counteracts the toxicity associated with the formation of D-aminoacyl-tRNA entities in vivo and helps enforce protein L-homochirality. In contrast to DTD1, deacylates L-Ala mischarged on tRNA(Thr)(G4.U69) by alanine-tRNA ligase AARS. Can deacylate L-Ala due to a relaxed specificity for substrate chirality caused by the trans conformation of the Gly-Pro motif in the active site. Also hydrolyzes correctly charged, achiral, glycyl-tRNA(Gly) in vitro, although in vivo EEF1A1/EF-Tu may protect cognate achiral glycyl-tRNA(Gly) from DTD2-mediated deacetylation. This chain is D-aminoacyl-tRNA deacylase 2 (DTD2), found in Homo sapiens (Human).